Consider the following 155-residue polypeptide: Transcriptional repressor NrdR (155 aa).

A zinc finger lies at 3–34 (CPYCQNADTRVVDSRLIGEGEQVRRRRQCPSC). The ATP-cone domain occupies 49-139 (PRVVKSDGRR…VYRRFEDVGA (91 aa)).

This sequence belongs to the NrdR family. Requires Zn(2+) as cofactor.

Functionally, negatively regulates transcription of bacterial ribonucleotide reductase nrd genes and operons by binding to NrdR-boxes. This is Transcriptional repressor NrdR from Halorhodospira halophila (strain DSM 244 / SL1) (Ectothiorhodospira halophila (strain DSM 244 / SL1)).